Reading from the N-terminus, the 114-residue chain is Ig kappa chain V-I region S107A (114 aa).

The framework-1 stretch occupies residues Asp1–Cys23. The cysteines at positions 23 and 94 are disulfide-linked. A complementarity-determining-1 region spans residues Thr24–Ala40. The framework-2 stretch occupies residues Trp41–Tyr55. Positions Gly56 to Ile62 are complementarity-determining-2. A framework-3 region spans residues Gly63–Cys94. The interval Ala95–Thr103 is complementarity-determining-3. The segment at Phe104–Lys113 is framework-4.

Its function is as follows. Anti-phosphocholine antibody. The sequence is that of Ig kappa chain V-I region S107A (Igkv7-33) from Mus musculus (Mouse).